A 478-amino-acid chain; its full sequence is Glutamate--tRNA ligase (478 aa).

Residues 8 to 18 (PSPTGYLHLGN) carry the 'HIGH' region motif. The 'KMSKS' region motif lies at 248–252 (KLSKR). Lys-251 contributes to the ATP binding site.

Belongs to the class-I aminoacyl-tRNA synthetase family. Glutamate--tRNA ligase type 1 subfamily. Monomer.

It is found in the cytoplasm. The catalysed reaction is tRNA(Glu) + L-glutamate + ATP = L-glutamyl-tRNA(Glu) + AMP + diphosphate. Functionally, catalyzes the attachment of glutamate to tRNA(Glu) in a two-step reaction: glutamate is first activated by ATP to form Glu-AMP and then transferred to the acceptor end of tRNA(Glu). The chain is Glutamate--tRNA ligase from Sulfurihydrogenibium sp. (strain YO3AOP1).